The primary structure comprises 460 residues: Putative arginine/ornithine antiporter (460 aa).

The Cytoplasmic portion of the chain corresponds to 1–4; that stretch reads MEKK. Residues 5–25 form a helical membrane-spanning segment; the sequence is LGLSALTALVLSSMLGAGVFS. Residues 26–38 lie on the Periplasmic side of the membrane; sequence LPQNMAAVASPAA. A helical transmembrane segment spans residues 39–59; that stretch reads LLIGWGITGAGILLLAFAMLI. The Cytoplasmic portion of the chain corresponds to 60–92; sequence LTRIRPELDGGIFTYAREGFGELIGFCSAWGYW. A helical membrane pass occupies residues 93–113; that stretch reads LCAVIANVSYLVIVFSALSFF. The Periplasmic portion of the chain corresponds to 114 to 125; it reads TDTPELRLFGDG. Residues 126-146 form a helical membrane-spanning segment; sequence NTWQSIVGASALLWIVHFLIL. Over 147-157 the chain is Cytoplasmic; the sequence is RGVQTAASINL. A helical membrane pass occupies residues 158-178; sequence VATLAKLLPLGLFVVLAMMMF. The Periplasmic portion of the chain corresponds to 179-201; that stretch reads KLDTFKLDFTGLALGVPVWEQVK. A helical membrane pass occupies residues 202–222; that stretch reads NTMLITLWVFIGVEGAVVVSA. Residues 223–235 lie on the Cytoplasmic side of the membrane; the sequence is RARNKRDVGKATL. A helical membrane pass occupies residues 236 to 256; that stretch reads LAVLSALGVYLLVTLLSLGVV. Residues 257-282 are Periplasmic-facing; it reads ARPELAEIRNPSMAGLMVEMMGPWGE. Residues 283–303 form a helical membrane-spanning segment; the sequence is IIIAAGLIVSVCGAYLSWTIM. At 304–331 the chain is on the cytoplasmic side; sequence AAEVPFLAATHKAFPRIFARQNAQAAPS. Residues 332-352 traverse the membrane as a helical segment; it reads ASLWLTNICVQICLVLIWLTG. The Periplasmic segment spans residues 353–357; sequence SDYNT. Residues 358–378 traverse the membrane as a helical segment; the sequence is LLTIASEMILVPYFLVGAFLL. Topologically, residues 379 to 384 are cytoplasmic; sequence KIATRP. 2 helical membrane-spanning segments follow: residues 385-405 and 406-426; these read LHKA…YASG and PMHL…FLYA. Over 427–439 the chain is Cytoplasmic; the sequence is RKTHTHDNVLNRQ. The helical transmembrane segment at 440–460 threads the bilayer; sequence EMVLIGMLLIASVPATWMLVG.

This sequence belongs to the amino acid-polyamine-organocation (APC) superfamily. Basic amino acid/polyamine antiporter (APA) (TC 2.A.3.2) family.

Its subcellular location is the cell inner membrane. The enzyme catalyses L-ornithine(in) + L-arginine(out) = L-ornithine(out) + L-arginine(in). Catalyzes electroneutral exchange between arginine and ornithine to allow high-efficiency energy conversion in the arginine deiminase pathway. This Escherichia coli O6:H1 (strain CFT073 / ATCC 700928 / UPEC) protein is Putative arginine/ornithine antiporter (ydgI).